The sequence spans 124 residues: MPRLKTRREKRLRRHKRIRKKVFGTPERPRLCVYRSLKHFYAQIIDDTIGHTLVSASTLDPEFEKITGKRGGKSIKDAEVVAEIIARRALEKGIKKVVFDRGGFKYHGKIKAFADKCREMGLEF.

This sequence belongs to the universal ribosomal protein uL18 family. In terms of assembly, part of the 50S ribosomal subunit; part of the 5S rRNA/L5/L18/L25 subcomplex. Contacts the 5S and 23S rRNAs.

In terms of biological role, this is one of the proteins that bind and probably mediate the attachment of the 5S RNA into the large ribosomal subunit, where it forms part of the central protuberance. The protein is Large ribosomal subunit protein uL18 of Aquifex aeolicus (strain VF5).